A 607-amino-acid polypeptide reads, in one-letter code: Protease Do-like 2, chloroplastic (607 aa).

Residues 41-104 (SSNIKRKSSR…LSDFSRDQQT (64 aa)) form a disordered region. A compositionally biased stretch (basic and acidic residues) spans 87-104 (PKKEKKESLSDFSRDQQT). The tract at residues 118–317 (VVKVYCTHTA…LTDYERNGKY (200 aa)) is serine protease. Residues His-159, Asp-190, and Ser-268 each act as charge relay system in the active site. A PDZ domain is found at 308-403 (LTDYERNGKY…YLISQKFAGD (96 aa)).

It belongs to the peptidase S1C family.

Its subcellular location is the plastid. The protein localises to the chloroplast thylakoid membrane. Its function is as follows. Serine protease that performs the primary cleavage of the photodamaged D1 protein in plant photosystem II. The polypeptide is Protease Do-like 2, chloroplastic (DEGP2) (Arabidopsis thaliana (Mouse-ear cress)).